The following is a 198-amino-acid chain: UPF0098 protein PH1269 (198 aa).

Belongs to the UPF0098 family.

In Pyrococcus horikoshii (strain ATCC 700860 / DSM 12428 / JCM 9974 / NBRC 100139 / OT-3), this protein is UPF0098 protein PH1269.